We begin with the raw amino-acid sequence, 719 residues long: MNKDEIKNLTALEAESELEWLAKEIARHDVLYNRDDQPEISDAEYDALRRRNAEIEALFPELIRSDSPSHKIGAPVSEKFEKSVHAQAMLSLDNAFSSEDICEFIVRIRRFLRLPATQILEMTAEPKIDGLSLSLRYEKGRLVCAATRGDGYIGENVTANARTISDIPKVLRGEFPDIIEVRGEVYMRRENFQALNMSQQEKGKFVFANPRNAAAGSLRQLDPRITASRKLHFFAYACGEVSETFAASQMEMMKKLKEYGFFINPLTKSFKTLEEIISYYHDIEECRHSLSYDIDGIVYKVNDLKLQMRLGFVSRSPRWAVAHKFPAEKAMALLEGIDIQVGRTGALTPVARLAPITIGGVVVTNASLHNEDYIKGIGHKGESIREGRDIRVGDTVIVQRAGDVIPQIVDIIAEKRPKGASAFVFPHLCPACGSHAVREVGESVRRCTGGLICPAQAIERIRHFVSRNAFDIEGLGKKQVEFFFHIQDEALCIHTPADIFTLQRRQEKALVRLENMEGFGTVSVRKLYNAINMRRKVPLSRFLFALGIRHIGEVNARRLAHAYQNYTAFETVAMAATMPYDKVGEEGNEAWLELTNIEGIGPQVGEAIIDFYQEAHNREVLAALLREVTPLDEENVMTASSPIAGKTIVFTGTLARMSRDEAKALAERLGAKTSGSLSKKTDLLVAGSAVGSKLAKAQGLGVEVIDEEAWLQLIEGSYI.

Residues 42–46 (DAEYD), 91–92 (SL), and E125 contribute to the NAD(+) site. The active-site N6-AMP-lysine intermediate is the K127. R148, E184, K300, and K324 together coordinate NAD(+). Positions 429, 432, 447, and 453 each coordinate Zn(2+). The region spanning 638–719 (TASSPIAGKT…WLQLIEGSYI (82 aa)) is the BRCT domain.

It belongs to the NAD-dependent DNA ligase family. LigA subfamily. The cofactor is Mg(2+). It depends on Mn(2+) as a cofactor.

The catalysed reaction is NAD(+) + (deoxyribonucleotide)n-3'-hydroxyl + 5'-phospho-(deoxyribonucleotide)m = (deoxyribonucleotide)n+m + AMP + beta-nicotinamide D-nucleotide.. Its function is as follows. DNA ligase that catalyzes the formation of phosphodiester linkages between 5'-phosphoryl and 3'-hydroxyl groups in double-stranded DNA using NAD as a coenzyme and as the energy source for the reaction. It is essential for DNA replication and repair of damaged DNA. This chain is DNA ligase, found in Bartonella quintana (strain Toulouse) (Rochalimaea quintana).